The primary structure comprises 442 residues: Putative aminohydrolase SsnA (442 aa).

Residues His-62, His-64, His-227, and Asp-312 each contribute to the Zn(2+) site.

The protein belongs to the metallo-dependent hydrolases superfamily. ATZ/TRZ family.

The protein is Putative aminohydrolase SsnA (ssnA) of Escherichia coli (strain K12).